A 93-amino-acid chain; its full sequence is CRISPR-associated endoribonuclease Cas2 3 (93 aa).

D10 is a binding site for Mg(2+).

It belongs to the CRISPR-associated endoribonuclease Cas2 protein family. In terms of assembly, homodimer, forms a heterotetramer with a Cas1 homodimer. Requires Mg(2+) as cofactor.

CRISPR (clustered regularly interspaced short palindromic repeat), is an adaptive immune system that provides protection against mobile genetic elements (viruses, transposable elements and conjugative plasmids). CRISPR clusters contain sequences complementary to antecedent mobile elements and target invading nucleic acids. CRISPR clusters are transcribed and processed into CRISPR RNA (crRNA). Functions as a ssRNA-specific endoribonuclease. Involved in the integration of spacer DNA into the CRISPR cassette. The protein is CRISPR-associated endoribonuclease Cas2 3 of Chloroflexus aurantiacus (strain ATCC 29366 / DSM 635 / J-10-fl).